The sequence spans 489 residues: UDP-N-acetylmuramoyl-L-alanyl-D-glutamate--2,6-diaminopimelate ligase (489 aa).

S30 is a UDP-N-acetyl-alpha-D-muramoyl-L-alanyl-D-glutamate binding site. 108–114 is a binding site for ATP; sequence GTNGKTT. Residues N149, 150-151, S177, Q183, and R185 each bind UDP-N-acetyl-alpha-D-muramoyl-L-alanyl-D-glutamate; that span reads TT. K217 carries the post-translational modification N6-carboxylysine. Meso-2,6-diaminopimelate-binding positions include R383, 407–410, G459, and E463; that span reads DNPR. The Meso-diaminopimelate recognition motif signature appears at 407-410; sequence DNPR.

The protein belongs to the MurCDEF family. MurE subfamily. Requires Mg(2+) as cofactor. In terms of processing, carboxylation is probably crucial for Mg(2+) binding and, consequently, for the gamma-phosphate positioning of ATP.

The protein resides in the cytoplasm. The catalysed reaction is UDP-N-acetyl-alpha-D-muramoyl-L-alanyl-D-glutamate + meso-2,6-diaminopimelate + ATP = UDP-N-acetyl-alpha-D-muramoyl-L-alanyl-gamma-D-glutamyl-meso-2,6-diaminopimelate + ADP + phosphate + H(+). The protein operates within cell wall biogenesis; peptidoglycan biosynthesis. Catalyzes the addition of meso-diaminopimelic acid to the nucleotide precursor UDP-N-acetylmuramoyl-L-alanyl-D-glutamate (UMAG) in the biosynthesis of bacterial cell-wall peptidoglycan. This Geobacillus thermodenitrificans (strain NG80-2) protein is UDP-N-acetylmuramoyl-L-alanyl-D-glutamate--2,6-diaminopimelate ligase.